We begin with the raw amino-acid sequence, 196 residues long: 3-isopropylmalate dehydratase small subunit (196 aa).

This sequence belongs to the LeuD family. LeuD type 1 subfamily. Heterodimer of LeuC and LeuD.

The catalysed reaction is (2R,3S)-3-isopropylmalate = (2S)-2-isopropylmalate. It functions in the pathway amino-acid biosynthesis; L-leucine biosynthesis; L-leucine from 3-methyl-2-oxobutanoate: step 2/4. In terms of biological role, catalyzes the isomerization between 2-isopropylmalate and 3-isopropylmalate, via the formation of 2-isopropylmaleate. The polypeptide is 3-isopropylmalate dehydratase small subunit (Streptococcus sanguinis (strain SK36)).